The chain runs to 206 residues: Triosephosphate isomerase (206 aa).

H76 (electrophile) is an active-site residue. Catalysis depends on E146, which acts as the Proton acceptor.

The protein belongs to the triosephosphate isomerase family. Homodimer.

It carries out the reaction D-glyceraldehyde 3-phosphate = dihydroxyacetone phosphate. It functions in the pathway carbohydrate biosynthesis; gluconeogenesis. Its pathway is carbohydrate degradation; glycolysis; D-glyceraldehyde 3-phosphate from glycerone phosphate: step 1/1. The polypeptide is Triosephosphate isomerase (Tpi) (Anopheles merus (Mosquito)).